The chain runs to 403 residues: Indoleamine 2,3-dioxygenase 1 (403 aa).

His346 contacts heme b. A disordered region spans residues 360-381; the sequence is QQPKENKTSEDPSKLEAKGTGG. Basic and acidic residues predominate over residues 363–376; sequence KENKTSEDPSKLEA.

The protein belongs to the indoleamine 2,3-dioxygenase family. As to quaternary structure, monomer. Requires heme b as cofactor. As to expression, expressed in mature dendritic cells located in lymphoid organs (including lymph nodes, spleen, tonsils, Peyers's patches, the gut lamina propria, and the thymic medulla), in some epithelial cells of the female genital tract, as well as in endothelial cells of term placenta and in lung parenchyma. Weakly or not expressed in most normal tissues, but mostly inducible in most tissues. Expressed in more than 50% of tumors, either by tumoral, stromal, or endothelial cells (expression in tumor is associated with a worse clinical outcome). Not overexpressed in tumor-draining lymph nodes.

The protein localises to the cytoplasm. The protein resides in the cytosol. It carries out the reaction D-tryptophan + O2 = N-formyl-D-kynurenine. It catalyses the reaction L-tryptophan + O2 = N-formyl-L-kynurenine. The protein operates within amino-acid degradation; L-tryptophan degradation via kynurenine pathway; L-kynurenine from L-tryptophan: step 1/2. Activity is inhibited by and MTH-trp (methylthiohydantoin-DL-tryptophan), modestly inhibited by L-1MT (1-methyl-L-tryptophan) but not D-1MT (1-methyl-D-tryptophan). Catalyzes the first and rate limiting step of the catabolism of the essential amino acid tryptophan along the kynurenine pathway. Involved in the peripheral immune tolerance, contributing to maintain homeostasis by preventing autoimmunity or immunopathology that would result from uncontrolled and overreacting immune responses. Tryptophan shortage inhibits T lymphocytes division and accumulation of tryptophan catabolites induces T-cell apoptosis and differentiation of regulatory T-cells. Acts as a suppressor of anti-tumor immunity. Limits the growth of intracellular pathogens by depriving tryptophan. Protects the fetus from maternal immune rejection. The polypeptide is Indoleamine 2,3-dioxygenase 1 (Homo sapiens (Human)).